The primary structure comprises 699 residues: Envelope glycoprotein G (699 aa).

The first 22 residues, 1–22 (MHAIAPRLLLLFVLSGLPGTRG), serve as a signal peptide directing secretion. The Virion surface segment spans residues 23-650 (GSGVPGPINP…WFLTASPALD (628 aa)). N-linked (GlcNAc...) asparagine; by host glycosylation is found at Asn104 and Asn163. Disordered stretches follow at residues 302-390 (PGAL…TTPP) and 403-632 (TPEE…PSGP). Positions 323-336 (LRTDPEGVDPDVRA) are enriched in basic and acidic residues. Residues 348–359 (EDTSSDSPTSAP) are compositionally biased toward polar residues. Low complexity-rich tracts occupy residues 376-390 (DPSA…TTPP) and 403-447 (TPEE…AKTP). An N-linked (GlcNAc...) asparagine; by host glycan is attached at Asn437. 2 stretches are compositionally biased toward pro residues: residues 448–459 (PTTPAPTTPPPT) and 467–482 (PTTP…PATP). Residues 483-531 (GPVGASAAPTADSPLTASPPATAPGPSAANVSVAATTATPGTRGTARTP) are compositionally biased toward low complexity. Asn512 is a glycosylation site (N-linked (GlcNAc...) asparagine; by host). Positions 544–554 (DAPPGSPAPPP) are enriched in pro residues. The span at 562–578 (EEFEGAGDGEPPEDDDS) shows a compositional bias: acidic residues. Pro residues predominate over residues 589 to 605 (PNKPPPARPGPIRPTLP). A helical membrane pass occupies residues 651 to 671 (ILFIISTTIHTAAFVCLVALA). Over 672–699 (AQLWRGRAGRRRYAHPSVRYVCLPPERD) the chain is Intravirion.

It belongs to the alphaherpesvirinae glycoprotein G family.

It is found in the virion membrane. Chemokine-binding protein that inhibits neutrophils' chemotaxis. The sequence is that of Envelope glycoprotein G (gG) from Human herpesvirus 2 (strain HG52) (HHV-2).